Here is a 176-residue protein sequence, read N- to C-terminus: dCTP deaminase (176 aa).

Residues 99-104 (RSTLAR) and aspartate 115 contribute to the dCTP site. Glutamate 125 functions as the Proton donor/acceptor in the catalytic mechanism. Glutamine 163 contributes to the dCTP binding site.

The protein belongs to the dCTP deaminase family. In terms of assembly, homotrimer.

The enzyme catalyses dCTP + H2O + H(+) = dUTP + NH4(+). Its pathway is pyrimidine metabolism; dUMP biosynthesis; dUMP from dCTP (dUTP route): step 1/2. In terms of biological role, catalyzes the deamination of dCTP to dUTP. This is dCTP deaminase from Pyrobaculum islandicum (strain DSM 4184 / JCM 9189 / GEO3).